We begin with the raw amino-acid sequence, 329 residues long: Cathepsin K (329 aa).

An N-terminal signal peptide occupies residues 1-15 (MWGLKVLLLPVVSFA). A propeptide spans 16 to 114 (LHPEEILDTQ…TLYIPDWEGR (99 aa)) (activation peptide). An N-linked (GlcNAc...) asparagine glycan is attached at N103. Intrachain disulfides connect C136/C177 and C170/C210. Residue C139 is part of the active site. N-linked (GlcNAc...) asparagine glycosylation occurs at N268. C269 and C318 are joined by a disulfide. Residues H276 and N296 contribute to the active site.

This sequence belongs to the peptidase C1 family. In terms of tissue distribution, predominantly expressed in osteclasts (bones).

Its subcellular location is the lysosome. The protein resides in the secreted. It is found in the apical cell membrane. It catalyses the reaction Broad proteolytic activity. With small-molecule substrates and inhibitors, the major determinant of specificity is P2, which is preferably Leu, Met &gt; Phe, and not Arg.. Functionally, thiol protease involved in osteoclastic bone resorption and may participate partially in the disorder of bone remodeling. Displays potent endoprotease activity against fibrinogen at acid pH. May play an important role in extracellular matrix degradation. Involved in the release of thyroid hormone thyroxine (T4) by limited proteolysis of TG/thyroglobulin in the thyroid follicle lumen. The protein is Cathepsin K (CTSK) of Oryctolagus cuniculus (Rabbit).